Reading from the N-terminus, the 221-residue chain is Glutathione S-transferase alpha-5 (221 aa).

One can recognise a GST N-terminal domain in the interval glycine 3 to glycine 83. At lysine 4 the chain carries N6-succinyllysine. Residues tyrosine 9, arginine 45, glutamine 54–valine 55, and glutamine 67–threonine 68 each bind glutathione. One can recognise a GST C-terminal domain in the interval aspartate 85–phenylalanine 207.

The protein belongs to the GST superfamily. Alpha family. In terms of assembly, heterodimer of YC1 and YC2. As to expression, liver, nasal mucosa and epididymis.

It localises to the cytoplasm. It carries out the reaction RX + glutathione = an S-substituted glutathione + a halide anion + H(+). In terms of biological role, conjugation of reduced glutathione to a wide number of exogenous and endogenous hydrophobic electrophiles. Has substantial activity toward aflatoxin B1-8,9-epoxide. The protein is Glutathione S-transferase alpha-5 (Gsta5) of Rattus norvegicus (Rat).